The following is a 745-amino-acid chain: Polyribonucleotide nucleotidyltransferase (745 aa).

2 residues coordinate Mg(2+): aspartate 487 and aspartate 493. The region spanning 554-613 is the KH domain; it reads PSTTTIKIDKDKIRDIIGPGGKVIKEICEISGAKIDISDDGTVSIYASDRDKLKVALDKI. Residues 623–691 enclose the S1 motif domain; it reads GEIFNGTVMK…NKGKAKLTIK (69 aa). The segment at 691 to 745 is disordered; sequence KNADKDKSSNNTKPKTNAKDNSEPEQRRDSSKKRAWNEDNNAETAEVITERKYFN. Residues 707–719 show a composition bias toward basic and acidic residues; it reads NAKDNSEPEQRRD.

It belongs to the polyribonucleotide nucleotidyltransferase family. Requires Mg(2+) as cofactor.

Its subcellular location is the cytoplasm. The enzyme catalyses RNA(n+1) + phosphate = RNA(n) + a ribonucleoside 5'-diphosphate. In terms of biological role, involved in mRNA degradation. Catalyzes the phosphorolysis of single-stranded polyribonucleotides processively in the 3'- to 5'-direction. This Rickettsia massiliae (strain Mtu5) protein is Polyribonucleotide nucleotidyltransferase.